The primary structure comprises 333 residues: Gramillins biosynthetic cluster protein FGSG_00039 (333 aa).

The protein operates within mycotoxin biosynthesis. Functionally, part of the gene cluster that mediates the biosynthesis of gramillins A and B, bicyclic lipopeptides that induce cell death in maize leaves but not in wheat leaves. The nonribosomal peptide synthetase GRA1 incorporates respectively a glutamic adic (Glu), a leucine (Leu), a serine (Ser), a hydroxyglutamine (HOGln), a 2-amino decanoic acid, and 2 cysteins (CysB and CysA). The biosynthesis of 2-amino decanoic acid incorporated in gramillins could be initiated by a fatty acid synthase composed of the alpha and beta subunits FGSG_00036 and FGSG_11656. The cytochrome P450 monooxygenase FGSG_15680 could hydroxylate the fatty acid chain. Subsequent oxidation to the ketone by the oxidoreductase FGSG_00048 and transamination by aminotransferase FGSG_00049 could form 2-amino-decanoic acid. On the other hand, FGSG_15680 could also be responsible for the HO-modified glutamine at the gamma-position. Whether hydroxylation occurs on the fully assembled product or on the Gln residue prior to assembly into the gramillins requires further proof. The thioredoxin FGSG_00043 could also be required for the disulfide-bond formation between CysA and CysB. The specific involvement of the remaining proteins from the cluster is more difficult to discern, but could have broader regulatory (FGSG_00040 and FGSG_11657) or enzymatic functions (FGSG_00044 and FGSG_00045). The final C-domain of GRA1 does not possess the expected sequence of a termination CT domain, often implicated in macrocyclization and release of a cyclopeptidein fungal NRPs; and the thioesterase FGSG_00047 may act in concert with the terminal C-domain of GRA1 to catalyze the formation of the macrocyclic anhydride and release of the products. In Gibberella zeae (strain ATCC MYA-4620 / CBS 123657 / FGSC 9075 / NRRL 31084 / PH-1) (Wheat head blight fungus), this protein is Gramillins biosynthetic cluster protein FGSG_00039.